The sequence spans 185 residues: Ribosome-recycling factor (185 aa).

Belongs to the RRF family.

It is found in the cytoplasm. In terms of biological role, responsible for the release of ribosomes from messenger RNA at the termination of protein biosynthesis. May increase the efficiency of translation by recycling ribosomes from one round of translation to another. The chain is Ribosome-recycling factor from Francisella tularensis subsp. holarctica (strain FTNF002-00 / FTA).